Consider the following 436-residue polypeptide: Trigger factor (436 aa).

Residues 161–255 (DDVAIIDFKT…VKEVREKQLP (95 aa)) form the PPIase FKBP-type domain.

It belongs to the FKBP-type PPIase family. Tig subfamily.

It is found in the cytoplasm. The enzyme catalyses [protein]-peptidylproline (omega=180) = [protein]-peptidylproline (omega=0). Functionally, involved in protein export. Acts as a chaperone by maintaining the newly synthesized protein in an open conformation. Functions as a peptidyl-prolyl cis-trans isomerase. The chain is Trigger factor from Akkermansia muciniphila (strain ATCC BAA-835 / DSM 22959 / JCM 33894 / BCRC 81048 / CCUG 64013 / CIP 107961 / Muc).